We begin with the raw amino-acid sequence, 472 residues long: Cysteine--tRNA ligase (472 aa).

Cysteine 29 lines the Zn(2+) pocket. The 'HIGH' region signature appears at 31-41; that stretch reads PTVYDFAHIGN. Residues cysteine 227, histidine 252, and glutamate 256 each coordinate Zn(2+). Positions 285–289 match the 'KMSKS' region motif; it reads KMSKS. Position 288 (lysine 288) interacts with ATP.

Belongs to the class-I aminoacyl-tRNA synthetase family. As to quaternary structure, monomer. Zn(2+) is required as a cofactor.

It is found in the cytoplasm. It catalyses the reaction tRNA(Cys) + L-cysteine + ATP = L-cysteinyl-tRNA(Cys) + AMP + diphosphate. This chain is Cysteine--tRNA ligase, found in Bradyrhizobium sp. (strain BTAi1 / ATCC BAA-1182).